We begin with the raw amino-acid sequence, 288 residues long: UPF0276 protein VP3015 (288 aa).

This sequence belongs to the UPF0276 family.

This is UPF0276 protein VP3015 from Vibrio parahaemolyticus serotype O3:K6 (strain RIMD 2210633).